The chain runs to 369 residues: UPF0283 membrane protein RPA1583 (369 aa).

The interval 1–61 is disordered; it reads MTERVPPRRP…APPPPPPRAR (61 aa). Over residues 34–51 the composition is skewed to low complexity; it reads AKPSAKADARPAASAAGA. 3 helical membrane-spanning segments follow: residues 90–110, 124–144, and 239–259; these read WGTV…WLWI, LGTI…IIIG, and VSLV…VAIA.

It belongs to the UPF0283 family.

It is found in the cell inner membrane. The protein is UPF0283 membrane protein RPA1583 of Rhodopseudomonas palustris (strain ATCC BAA-98 / CGA009).